Reading from the N-terminus, the 340-residue chain is Ketol-acid reductoisomerase (NADP(+)) (340 aa).

The KARI N-terminal Rossmann domain maps to 1-183; that stretch reads MAITVYYDKD…GGGRTGIIET (183 aa). NADP(+) contacts are provided by residues 26-29, R49, S52, S54, and 84-87; these read FGSQ and DEIQ. The active site involves H109. G135 lines the NADP(+) pocket. One can recognise a KARI C-terminal knotted domain in the interval 184 to 329; the sequence is TFKAETETDL…RNLRAMMPWI (146 aa). Mg(2+) is bound by residues D192, E196, E228, and E232. S253 provides a ligand contact to substrate.

Belongs to the ketol-acid reductoisomerase family. It depends on Mg(2+) as a cofactor.

The catalysed reaction is (2R)-2,3-dihydroxy-3-methylbutanoate + NADP(+) = (2S)-2-acetolactate + NADPH + H(+). It carries out the reaction (2R,3R)-2,3-dihydroxy-3-methylpentanoate + NADP(+) = (S)-2-ethyl-2-hydroxy-3-oxobutanoate + NADPH + H(+). Its pathway is amino-acid biosynthesis; L-isoleucine biosynthesis; L-isoleucine from 2-oxobutanoate: step 2/4. It participates in amino-acid biosynthesis; L-valine biosynthesis; L-valine from pyruvate: step 2/4. Functionally, involved in the biosynthesis of branched-chain amino acids (BCAA). Catalyzes an alkyl-migration followed by a ketol-acid reduction of (S)-2-acetolactate (S2AL) to yield (R)-2,3-dihydroxy-isovalerate. In the isomerase reaction, S2AL is rearranged via a Mg-dependent methyl migration to produce 3-hydroxy-3-methyl-2-ketobutyrate (HMKB). In the reductase reaction, this 2-ketoacid undergoes a metal-dependent reduction by NADPH to yield (R)-2,3-dihydroxy-isovalerate. This is Ketol-acid reductoisomerase (NADP(+)) from Campylobacter jejuni subsp. jejuni serotype O:2 (strain ATCC 700819 / NCTC 11168).